Reading from the N-terminus, the 84-residue chain is uncharacterized protein (84 aa).

This sequence belongs to the chlamydial CPn_0711/CT_665/TC_0036 family.

This is an uncharacterized protein from Chlamydia muridarum (strain MoPn / Nigg).